The sequence spans 163 residues: Putative pre-16S rRNA nuclease (163 aa).

It belongs to the YqgF nuclease family.

It localises to the cytoplasm. Functionally, could be a nuclease involved in processing of the 5'-end of pre-16S rRNA. The chain is Putative pre-16S rRNA nuclease from Nitrobacter winogradskyi (strain ATCC 25391 / DSM 10237 / CIP 104748 / NCIMB 11846 / Nb-255).